A 491-amino-acid chain; its full sequence is Putative pentatricopeptide repeat-containing protein At1g02420 (491 aa).

PPR repeat units lie at residues 179–209 (DTACFNALLRTLCQEKSMTDARNVYHSLKHQ), 210–244 (FQPDLQTFNILLSGWKSSEEAEAFFEEMKGKGLKP), 245–279 (DVVTYNSLIDVYCKDREIEKAYKLIDKMREEEETP), 280–314 (DVITYTTVIGGLGLIGQPDKAREVLKEMKEYGCYP), 315–349 (DVAAYNAAIRNFCIARRLGDADKLVDEMVKKGLSP), 350–384 (NATTYNLFFRVLSLANDLGRSWELYVRMLGNECLP), 385–419 (NTQSCMFLIKMFKRHEKVDMAMRLWEDMVVKGFGS), and 420–454 (YSLVSDVLLDLLCDLAKVEEAEKCLLEMVEKGHRP).

Belongs to the PPR family. P subfamily.

This is Putative pentatricopeptide repeat-containing protein At1g02420 from Arabidopsis thaliana (Mouse-ear cress).